The primary structure comprises 144 residues: uncharacterized protein (144 aa).

The segment covering 125–135 (PQQQNNHQLQS) has biased composition (polar residues). Residues 125-144 (PQQQNNHQLQSKPKAASISR) form a disordered region.

This is an uncharacterized protein from Rickettsia prowazekii (strain Madrid E).